The primary structure comprises 178 residues: Oligoribonuclease (178 aa).

The 162-residue stretch at 7 to 168 (LIWIDLEMTG…DDIRESIAEL (162 aa)) folds into the Exonuclease domain. Residue Y128 is part of the active site.

This sequence belongs to the oligoribonuclease family.

The protein resides in the cytoplasm. Functionally, 3'-to-5' exoribonuclease specific for small oligoribonucleotides. The polypeptide is Oligoribonuclease (Francisella tularensis subsp. novicida (strain U112)).